The sequence spans 738 residues: Protein ALEX (738 aa).

6 disordered regions span residues 1-105, 155-188, 237-350, 387-516, 528-578, and 611-689; these read MSPS…EEAM, REDY…ASHA, TTFP…LPKP, MSGQ…LGQP, GEPG…LDPP, and GMRL…RPRI. Polar residues predominate over residues 257–273; the sequence is GSTTTPLSIWTAPQSQV. A compositionally biased stretch (basic and acidic residues) spans 279-301; sequence KSREPQLRASTQRDPHLSDKQPR. Over residues 387–396 the composition is skewed to polar residues; that stretch reads MSGQNQTEGQ. Composition is skewed to pro residues over residues 410–438, 448–467, and 476–485; these read QPPP…PPSQ, PSLP…PRQP, and PGQPPSPLRS. Low complexity-rich tracts occupy residues 542 to 564, 615 to 626, and 656 to 671; these read PSLP…LPAG, RPASARSSPPAM, and ATRS…EAAS.

It belongs to the ALEX family. As to quaternary structure, interacts with the N-terminal region of the XLas isoforms of guanine nucleotide-binding protein G(s) subunit alpha.

It is found in the cell membrane. It localises to the cell projection. The protein resides in the ruffle. Its function is as follows. May inhibit the adenylyl cyclase-stimulating activity of guanine nucleotide-binding protein G(s) subunit alpha which is produced from the same locus in a different open reading frame. This is Protein ALEX from Rattus norvegicus (Rat).